We begin with the raw amino-acid sequence, 389 residues long: Urotensin-2 receptor (389 aa).

Composition is skewed to polar residues over residues 1–10 (MALTPESPSS) and 28–39 (PNATLNSSWASP). The tract at residues 1-39 (MALTPESPSSFPGLAAIGSSVPEPPGSPNATLNSSWASP) is disordered. Over 1 to 54 (MALTPESPSSFPGLAAIGSSVPEPPGSPNATLNSSWASPTEPSSLEDLVATGAI) the chain is Extracellular. N-linked (GlcNAc...) asparagine glycosylation is found at N29 and N33. Residues 55-77 (GTLLSAMGVVGVVGNAYTLVVTC) form a helical membrane-spanning segment. The Cytoplasmic portion of the chain corresponds to 78-87 (RSLRAVASMY). Residues 88-113 (IYVVNLALADLLYLLSIPFIVATYIT) traverse the membrane as a helical segment. Residues 114-124 (KEWHFGDVGCR) are Extracellular-facing. A disulfide bond links C123 and C199. The chain crosses the membrane as a helical span at residues 125-146 (VLFSLDFLTMHASIFTLTVMSS). At 147–167 (ERYAAVLRPLDTVQRPKGYRK) the chain is on the cytoplasmic side. A helical membrane pass occupies residues 168–186 (LLALGTWLLALLLTLPVML). The Extracellular portion of the chain corresponds to 187-209 (AMRLVRRGPKSLCLPAWGPRAHR). Residues 210–232 (AYLTLLFATSIAGPGLLIGLLYA) form a helical membrane-spanning segment. Topologically, residues 233-258 (RLARAYRRSQRASFKRARRPGARALR) are cytoplasmic. The chain crosses the membrane as a helical span at residues 259–284 (LVLGIVLLFWACFLPFWLWQLLAQYR). The Extracellular portion of the chain corresponds to 285–297 (EAPLAPRTARIVN). Residues 298 to 318 (YLTTCLTYGNSCANPFLYTLL) traverse the membrane as a helical segment. Residues 319-389 (TRNYRDHLRG…PALESPGDPA (71 aa)) lie on the Cytoplasmic side of the membrane. Residues 328–366 (GRVRSPGSGGVRGPVPSLQPRARFQRGSGRSLSSCSPQP) form a disordered region. A compositionally biased stretch (polar residues) spans 355–366 (SGRSLSSCSPQP).

Belongs to the G-protein coupled receptor 1 family.

It is found in the cell membrane. High affinity receptor for urotensin-2 and urotensin-2B. The activity of this receptor is mediated by a G-protein that activate a phosphatidylinositol-calcium second messenger system. The sequence is that of Urotensin-2 receptor (UTS2R) from Macaca mulatta (Rhesus macaque).